The sequence spans 348 residues: Fructose-1,6-bisphosphatase (348 aa).

A Pro/N-degron motif is present at residues 2–5; that stretch reads PTLV. A Phosphoserine modification is found at S12. AMP is bound by residues 27–31 and 38–42; these read IIEHQ and TGDFT. Mg(2+) contacts are provided by D79 and E108. 122 to 123 contributes to the AMP binding site; the sequence is SY. Mg(2+)-binding residues include D128, I130, and D131. 131 to 134 is a binding site for substrate; the sequence is DGSS. AMP is bound at residue R150. Substrate-binding positions include 222–225, 255–260, Y276, and 286–288; these read NEGN, RYVGSM, and KLR. A Mg(2+)-binding site is contributed by E292.

The protein belongs to the FBPase class 1 family. In terms of assembly, homotetramer. The cofactor is Mg(2+). Post-translationally, ubiquitinated. Targeted for proteasomal degradation when cells are shifted to glucose-containing growth medium.

The catalysed reaction is beta-D-fructose 1,6-bisphosphate + H2O = beta-D-fructose 6-phosphate + phosphate. Its pathway is carbohydrate biosynthesis; gluconeogenesis. With respect to regulation, subject to complex allosteric regulation. The enzyme can assume an active R-state, or an inactive T-state. Intermediate conformations may exist. AMP acts as allosteric inhibitor. AMP binding affects the turnover of bound substrate and not the affinity for substrate. This chain is Fructose-1,6-bisphosphatase (FBP1), found in Saccharomyces cerevisiae (strain ATCC 204508 / S288c) (Baker's yeast).